A 314-amino-acid chain; its full sequence is Oxaloacetate tautomerase FAHD2B, mitochondrial (314 aa).

The N-terminal 84 residues, 1 to 84 (MLVSGRRRLL…ATLSVARRAL (84 aa)), are a transit peptide targeting the mitochondrion. Glu159, Glu161, and Asp190 together coordinate Mg(2+).

This sequence belongs to the FAH family. It depends on Mg(2+) as a cofactor. The cofactor is Mn(2+).

It localises to the mitochondrion. The enzyme catalyses oxaloacetate = enol-oxaloacetate. In terms of biological role, tautomerase that converts enol-oxaloacetate, a strong inhibitor of succinate dehydrogenase, to the physiological keto form of oxaloacetate. It is thereby required to maximize aerobic respiration efficiency by preventing succinate dehydrogenase inhibition. This Homo sapiens (Human) protein is Oxaloacetate tautomerase FAHD2B, mitochondrial.